We begin with the raw amino-acid sequence, 120 residues long: uncharacterized protein (120 aa).

Residues 47–63 (VSIVIGLCTVLISAGAG) form a helical membrane-spanning segment.

Its subcellular location is the membrane. This is an uncharacterized protein from Sinorhizobium fredii (strain NBRC 101917 / NGR234).